Here is a 432-residue protein sequence, read N- to C-terminus: Glutamate-1-semialdehyde 2,1-aminomutase (432 aa).

Lysine 272 carries the post-translational modification N6-(pyridoxal phosphate)lysine.

It belongs to the class-III pyridoxal-phosphate-dependent aminotransferase family. HemL subfamily. Homodimer. Requires pyridoxal 5'-phosphate as cofactor.

Its subcellular location is the cytoplasm. The enzyme catalyses (S)-4-amino-5-oxopentanoate = 5-aminolevulinate. It participates in porphyrin-containing compound metabolism; protoporphyrin-IX biosynthesis; 5-aminolevulinate from L-glutamyl-tRNA(Glu): step 2/2. Its pathway is porphyrin-containing compound metabolism; chlorophyll biosynthesis. This is Glutamate-1-semialdehyde 2,1-aminomutase from Trichormus variabilis (strain ATCC 29413 / PCC 7937) (Anabaena variabilis).